The chain runs to 354 residues: D-alanine--D-alanine ligase (354 aa).

The region spanning 133–338 (KHLFAQAGLP…YSDLIEQLVE (206 aa)) is the ATP-grasp domain. ATP is bound at residue 166-221 (EKELGYPCFVKPANLGSSVGISKCRNREELEKAFELAFEYDRKIVVEEGIAGREIE). 3 residues coordinate Mg(2+): D292, E305, and N307.

This sequence belongs to the D-alanine--D-alanine ligase family. Requires Mg(2+) as cofactor. Mn(2+) serves as cofactor.

The protein resides in the cytoplasm. It catalyses the reaction 2 D-alanine + ATP = D-alanyl-D-alanine + ADP + phosphate + H(+). It participates in cell wall biogenesis; peptidoglycan biosynthesis. Its function is as follows. Cell wall formation. The chain is D-alanine--D-alanine ligase from Bacillus velezensis (strain DSM 23117 / BGSC 10A6 / LMG 26770 / FZB42) (Bacillus amyloliquefaciens subsp. plantarum).